A 342-amino-acid chain; its full sequence is RNA 3'-terminal phosphate cyclase (342 aa).

The protein belongs to the RNA 3'-terminal cyclase family. Type 1 subfamily.

The protein resides in the cytoplasm. The enzyme catalyses a 3'-end 3'-phospho-ribonucleotide-RNA + GTP = a 3'-end 2',3'-cyclophospho-ribonucleotide-RNA + GMP + diphosphate. Inhibited by GMP. Catalyzes the GTP-dependent conversion of 3'-phosphate to a 2',3'-cyclic phosphodiester at the end of RNA. The biological role of this enzyme is unknown but it is likely to function in some aspects of cellular RNA processing. This Pyrococcus furiosus (strain ATCC 43587 / DSM 3638 / JCM 8422 / Vc1) protein is RNA 3'-terminal phosphate cyclase.